Here is a 276-residue protein sequence, read N- to C-terminus: Small ribosomal subunit protein uS3 (276 aa).

Residues 39 to 110 enclose the KH type-2 domain; the sequence is IRRETMKFLK…KINIKIKEIK (72 aa).

It belongs to the universal ribosomal protein uS3 family. As to quaternary structure, part of the 30S ribosomal subunit. Forms a tight complex with proteins S10 and S14.

Functionally, binds the lower part of the 30S subunit head. Binds mRNA in the 70S ribosome, positioning it for translation. The chain is Small ribosomal subunit protein uS3 from Borrelia recurrentis (strain A1).